A 217-amino-acid polypeptide reads, in one-letter code: MKSTVEQAMLFEEKSIFENQAIEQGYSQVAGVDEAGRGPLAGPVVAGACILPRGKVFLGIDDSKKLTPKQRRYLYELLLEDPEVDCGVGVISVERIDEINILEATKEAMVQAIASLRSTPDFLLVDGLFLPHKIPSLKIIKGDARSVSIAAASIIAKEYRDELMRKLHVEYPEYGFDKHKGYGTAAHLQALKHFGPCVYHRKSFSPVKESIQEGVCQ.

The 190-residue stretch at 27 to 216 (SQVAGVDEAG…VKESIQEGVC (190 aa)) folds into the RNase H type-2 domain. Residues D33, E34, and D126 each contribute to the a divalent metal cation site.

It belongs to the RNase HII family. Mn(2+) serves as cofactor. Mg(2+) is required as a cofactor.

It localises to the cytoplasm. The catalysed reaction is Endonucleolytic cleavage to 5'-phosphomonoester.. Functionally, endonuclease that specifically degrades the RNA of RNA-DNA hybrids. In Chlamydia trachomatis serovar L2 (strain ATCC VR-902B / DSM 19102 / 434/Bu), this protein is Ribonuclease HII.